A 449-amino-acid chain; its full sequence is Serine--tRNA ligase (449 aa).

Residue 256 to 258 (TSE) participates in L-serine binding. 287–289 (RAE) serves as a coordination point for ATP. Glu-310 provides a ligand contact to L-serine. 374 to 377 (EISS) lines the ATP pocket. Position 410 (Ser-410) interacts with L-serine.

The protein belongs to the class-II aminoacyl-tRNA synthetase family. Type-1 seryl-tRNA synthetase subfamily. Homodimer. The tRNA molecule binds across the dimer.

The protein localises to the cytoplasm. It catalyses the reaction tRNA(Ser) + L-serine + ATP = L-seryl-tRNA(Ser) + AMP + diphosphate + H(+). The catalysed reaction is tRNA(Sec) + L-serine + ATP = L-seryl-tRNA(Sec) + AMP + diphosphate + H(+). Its pathway is aminoacyl-tRNA biosynthesis; selenocysteinyl-tRNA(Sec) biosynthesis; L-seryl-tRNA(Sec) from L-serine and tRNA(Sec): step 1/1. Catalyzes the attachment of serine to tRNA(Ser). Is also able to aminoacylate tRNA(Sec) with serine, to form the misacylated tRNA L-seryl-tRNA(Sec), which will be further converted into selenocysteinyl-tRNA(Sec). The polypeptide is Serine--tRNA ligase (Xanthomonas oryzae pv. oryzae (strain MAFF 311018)).